Here is a 489-residue protein sequence, read N- to C-terminus: Zeta-carotene desaturase (489 aa).

It belongs to the zeta carotene desaturase family. NAD(+) serves as cofactor. It depends on NADP(+) as a cofactor. The cofactor is FAD.

It catalyses the reaction 9,9'-di-cis-zeta-carotene + 2 a quinone = 7,7',9,9'-tetra-cis-lycopene + 2 a quinol. It functions in the pathway carotenoid biosynthesis; lycopene biosynthesis. Functionally, catalyzes the conversion of zeta-carotene to lycopene via the intermediary of neurosporene. It carries out two consecutive desaturations (introduction of double bonds) at positions C-7 and C-7'. The chain is Zeta-carotene desaturase (crtQ) from Synechocystis sp. (strain ATCC 27184 / PCC 6803 / Kazusa).